Here is a 430-residue protein sequence, read N- to C-terminus: tRNA(Ile)-lysidine synthase (430 aa).

Residue S21–S26 coordinates ATP.

Belongs to the tRNA(Ile)-lysidine synthase family.

Its subcellular location is the cytoplasm. The catalysed reaction is cytidine(34) in tRNA(Ile2) + L-lysine + ATP = lysidine(34) in tRNA(Ile2) + AMP + diphosphate + H(+). Ligates lysine onto the cytidine present at position 34 of the AUA codon-specific tRNA(Ile) that contains the anticodon CAU, in an ATP-dependent manner. Cytidine is converted to lysidine, thus changing the amino acid specificity of the tRNA from methionine to isoleucine. In Salmonella paratyphi B (strain ATCC BAA-1250 / SPB7), this protein is tRNA(Ile)-lysidine synthase.